Consider the following 320-residue polypeptide: Elongation factor Ts (320 aa).

The involved in Mg(2+) ion dislocation from EF-Tu stretch occupies residues 82-85; sequence TDFV.

It belongs to the EF-Ts family.

The protein localises to the cytoplasm. Associates with the EF-Tu.GDP complex and induces the exchange of GDP to GTP. It remains bound to the aminoacyl-tRNA.EF-Tu.GTP complex up to the GTP hydrolysis stage on the ribosome. The sequence is that of Elongation factor Ts from Flavobacterium johnsoniae (strain ATCC 17061 / DSM 2064 / JCM 8514 / BCRC 14874 / CCUG 350202 / NBRC 14942 / NCIMB 11054 / UW101) (Cytophaga johnsonae).